A 467-amino-acid polypeptide reads, in one-letter code: Argininosuccinate lyase (467 aa).

Belongs to the lyase 1 family. Argininosuccinate lyase subfamily.

The protein localises to the cytoplasm. The catalysed reaction is 2-(N(omega)-L-arginino)succinate = fumarate + L-arginine. It functions in the pathway amino-acid biosynthesis; L-arginine biosynthesis; L-arginine from L-ornithine and carbamoyl phosphate: step 3/3. This Anaeromyxobacter dehalogenans (strain 2CP-C) protein is Argininosuccinate lyase.